Consider the following 221-residue polypeptide: Protein-disulfide oxidoreductase DsbI (221 aa).

A helical transmembrane segment spans residues 27 to 47; that stretch reads FLWLLMAVAMGGLIILAHSFF. A disulfide bridge links Cys56 with Cys59. A run of 2 helical transmembrane segments spans residues 64-84 and 85-105; these read FAMF…KNII and LKLI…KFSV. A disulfide bond links Cys128 and Cys154. A helical membrane pass occupies residues 189–209; the sequence is LAFYEYGAGVPAGVWAMFCTV.

The protein belongs to the DsbB family. DsbI subfamily. Interacts with DsbL.

Its subcellular location is the cell inner membrane. In terms of biological role, required for disulfide bond formation in some proteins. Part of a redox system composed of DsbI and DsbL that mediates formation of an essential disulfide bond in AssT. The sequence is that of Protein-disulfide oxidoreductase DsbI from Lelliottia amnigena (Enterobacter amnigenus).